The sequence spans 168 residues: Fusaric acid resistance protein FusE (168 aa).

In terms of biological role, involved in the resistance (detoxification) of the fungal toxin fusaric acid. The protein is Fusaric acid resistance protein FusE (fusE) of Burkholderia cepacia (Pseudomonas cepacia).